The chain runs to 455 residues: Nucleoside-triphosphatase (455 aa).

The Proton acceptor role is filled by Glu-168.

The protein belongs to the GDA1/CD39 NTPase family.

The protein resides in the nucleus. It catalyses the reaction a ribonucleoside 5'-triphosphate + H2O = a ribonucleoside 5'-diphosphate + phosphate + H(+). In terms of biological role, might be involved in RNA transport out of nuclei. In Pisum sativum (Garden pea), this protein is Nucleoside-triphosphatase.